We begin with the raw amino-acid sequence, 231 residues long: Ribosomal RNA small subunit methyltransferase G (231 aa).

S-adenosyl-L-methionine-binding positions include G75, 125–126, and R140; that span reads GE. The span at 204–213 shows a compositional bias: acidic residues; the sequence is AEAEEGDSPE. The interval 204–231 is disordered; that stretch reads AEAEEGDSPEAADASRGVILELTKKNKG.

It belongs to the methyltransferase superfamily. RNA methyltransferase RsmG family.

It is found in the cytoplasm. Specifically methylates the N7 position of a guanine in 16S rRNA. The sequence is that of Ribosomal RNA small subunit methyltransferase G from Rhodopirellula baltica (strain DSM 10527 / NCIMB 13988 / SH1).